We begin with the raw amino-acid sequence, 291 residues long: Cell division control protein 2 homolog 1 (291 aa).

In terms of domain architecture, Protein kinase spans 1-284 (GENVEKIGEG…ARSAVEHEYF (284 aa)). ATP-binding positions include 7 to 15 (IGEGTYGVV) and Lys30. A Phosphothreonine modification is found at Thr11. Tyr12 is modified (phosphotyrosine). Asp124 acts as the Proton acceptor in catalysis. Phosphothreonine; by CAK is present on Thr158.

Belongs to the protein kinase superfamily. CMGC Ser/Thr protein kinase family. CDC2/CDKX subfamily. As to expression, found in most organs including root, young leaf, stem, vegetative meristem and flower bud.

The enzyme catalyses L-seryl-[protein] + ATP = O-phospho-L-seryl-[protein] + ADP + H(+). It carries out the reaction L-threonyl-[protein] + ATP = O-phospho-L-threonyl-[protein] + ADP + H(+). The catalysed reaction is [DNA-directed RNA polymerase] + ATP = phospho-[DNA-directed RNA polymerase] + ADP + H(+). With respect to regulation, phosphorylation at Thr-11 or Tyr-12 inactivates the enzyme, while phosphorylation at Thr-158 activates it. Functionally, plays a key role in the control of the eukaryotic cell cycle. Component of the kinase complex that phosphorylates the repetitive C-terminus of RNA polymerase II. This chain is Cell division control protein 2 homolog 1 (CDC2A), found in Medicago sativa (Alfalfa).